A 514-amino-acid chain; its full sequence is Probable lysine--tRNA ligase, cytoplasmic (514 aa).

Belongs to the class-II aminoacyl-tRNA synthetase family. In terms of assembly, homodimer.

Its subcellular location is the cytoplasm. It carries out the reaction tRNA(Lys) + L-lysine + ATP = L-lysyl-tRNA(Lys) + AMP + diphosphate. The sequence is that of Probable lysine--tRNA ligase, cytoplasmic from Vairimorpha ceranae (strain BRL01) (Microsporidian parasite).